Consider the following 199-residue polypeptide: Lysine exporter LysE (199 aa).

5 helical membrane-spanning segments follow: residues 6–26 (VVGF…NAFV), 42–62 (LCTV…GALI), 68–88 (ALNV…LLAA), 144–164 (WLFG…LGFG), and 178–198 (WRIL…SLTV).

Belongs to the LysE/ArgO transporter (TC 2.A.75) family.

The protein resides in the cell inner membrane. Its function is as follows. Catalyzes the efflux of L-lysine. The polypeptide is Lysine exporter LysE (Mycobacterium bovis (strain ATCC BAA-935 / AF2122/97)).